Reading from the N-terminus, the 616-residue chain is Membrane protein insertase YidC (616 aa).

The chain crosses the membrane as a helical span at residues 8–28 (MFVAIALSLVVLLGWHYFVTG). The segment at 33-85 (RQRQAAQSQTAQTGAPQTADGIPSPSPREGGPNAPAPGTLPGAAAQGPVSRED) is disordered. Composition is skewed to low complexity over residues 36–51 (QAAQ…PQTA) and 62–80 (GGPN…AQGP). 4 helical membrane-spanning segments follow: residues 386-406 (LLGN…LFFL), 460-480 (WPVL…FITI), 516-536 (YIPI…FIQM), and 551-571 (FAFM…GLVI).

This sequence belongs to the OXA1/ALB3/YidC family. Type 1 subfamily. In terms of assembly, interacts with the Sec translocase complex via SecD. Specifically interacts with transmembrane segments of nascent integral membrane proteins during membrane integration.

The protein localises to the cell inner membrane. Its function is as follows. Required for the insertion and/or proper folding and/or complex formation of integral membrane proteins into the membrane. Involved in integration of membrane proteins that insert both dependently and independently of the Sec translocase complex, as well as at least some lipoproteins. Aids folding of multispanning membrane proteins. The polypeptide is Membrane protein insertase YidC (Methylorubrum extorquens (strain PA1) (Methylobacterium extorquens)).